We begin with the raw amino-acid sequence, 810 residues long: Transducer protein CosT (810 aa).

Topologically, residues 1-38 are cytoplasmic; it reads MSEPTADAGDNSPSSTDTAPLDRVKAIALLPLRSYLVK. The helical transmembrane segment at 39-59 threads the bilayer; the sequence is FAVALLVILVIIAAGGFWVQA. Topologically, residues 60–323 are extracellular; it reads DATATLEANT…AFALSNQIRT (264 aa). A helical transmembrane segment spans residues 324–344; sequence GILGFILVALVGVVLVGGTIG. The region spanning 345–397 is the HAMP 1 domain; that stretch reads RNTAAAVQSLSAAAAEIEAGNYDVDVASSRRDEIGQLFASIGSMRDALVTQID. Residues 345-810 lie on the Cytoplasmic side of the membrane; the sequence is RNTAAAVQSL…DRDVTPTQTD (466 aa). A disordered region spans residues 403-427; the sequence is REQATEAQQDAEAERERAEDARERA. The span at 414–427 shows a compositional bias: basic and acidic residues; the sequence is EAERERAEDARERA. Residues 439–493 enclose the HAMP 2 domain; that stretch reads AELEAQAERYSDVMAACADGDLTRRMPADDTDNEAMAAIAASFNEMLAQWEHTII. The 237-residue stretch at 512–748 folds into the Methyl-accepting transducer domain; that stretch reads GAADAERASG…EAVSMTEEVA (237 aa). Residues glutamate 556 and glutamate 739 each carry the glutamate methyl ester (Glu) modification. The disordered stretch occupies residues 751-784; it reads SDSTAGEAQSVSAAAEEQAASMSEISDSVESLSG. Over residues 755–774 the composition is skewed to low complexity; it reads AGEAQSVSAAAEEQAASMSE. The segment covering 775–784 has biased composition (polar residues); it reads ISDSVESLSG.

Belongs to the methyl-accepting chemotaxis (MCP) protein family. Post-translationally, methylated by CheR.

It is found in the cell membrane. Functionally, mediates chemotaxis towards compatible osmolytes. Probably transduces the signal from the substrate-binding protein CosB to the histidine kinase CheA. The chain is Transducer protein CosT (cosT) from Halobacterium salinarum (strain ATCC 700922 / JCM 11081 / NRC-1) (Halobacterium halobium).